Consider the following 378-residue polypeptide: Putative glycosyltransferase ORF378 (378 aa).

Belongs to the glycosyltransferase group 1 family. Glycosyltransferase 4 subfamily.

The sequence is that of Putative glycosyltransferase ORF378 from Acidianus sp. F28 (AFV-2).